A 119-amino-acid polypeptide reads, in one-letter code: Fluoride-specific ion channel FluC 2 (119 aa).

4 helical membrane-spanning segments follow: residues 1–21 (MITV…RYGI), 33–53 (FPYA…FIFS), 56–76 (FSPF…TTFS), and 93–113 (VFTL…FLGY). 2 residues coordinate Na(+): glycine 70 and threonine 73.

It belongs to the fluoride channel Fluc/FEX (TC 1.A.43) family.

The protein localises to the cell membrane. The enzyme catalyses fluoride(in) = fluoride(out). Na(+) is not transported, but it plays an essential structural role and its presence is essential for fluoride channel function. Fluoride-specific ion channel. Important for reducing fluoride concentration in the cell, thus reducing its toxicity. The sequence is that of Fluoride-specific ion channel FluC 2 from Lactobacillus johnsonii (strain CNCM I-12250 / La1 / NCC 533).